The following is a 714-amino-acid chain: G protein-coupled receptor kinase 2 (714 aa).

Residues 1–308 form an N-terminal region; the sequence is MELENIVANT…LEAQPITYKT (308 aa). RGS domains follow at residues 53-174 and 177-294; these read YGYV…SQHS and INHK…HRYL. The interval 141 to 229 is disordered; it reads SNANPTETAE…GGGEGGGGGK (89 aa). Residues 154–175 are compositionally biased toward low complexity; sequence CNNTTANNCNNINNSNNSQHSS. Composition is skewed to basic and acidic residues over residues 176 to 190 and 199 to 220; these read DINHKKLDTRNHNGD and HQDDGDESVKCQEGHDDAEKGG. The Protein kinase domain occupies 309–574; it reads FRMYRVLGKG…GQDVMAHPFF (266 aa). ATP is bound by residues 315–323 and K338; that span reads LGKGGFGEV. Residue D435 is the Proton acceptor of the active site. In terms of domain architecture, AGC-kinase C-terminal spans 577–642; that stretch reads TQLNWRRLEA…GSVSISWQNE (66 aa). Phosphoserine is present on S612. T613 carries the post-translational modification Phosphothreonine. The segment at 667–714 is disordered; the sequence is INAAPEPDKAGCFPFRRKKKQPARTQPIPIPEHLLTTSHSVSSTTVES. Residues 698–714 show a composition bias toward low complexity; it reads EHLLTTSHSVSSTTVES.

It belongs to the protein kinase superfamily. AGC Ser/Thr protein kinase family. GPRK subfamily. In terms of tissue distribution, expressed in all larval tissues and in adult ovaries. Larval CNS staining is localized to axons projecting to the optic lobes and the mushroom bodies, in the longitudinal connectives, and in cell bodies and nerves of the ring gland corpus allatum. Adult CNS staining is detectable only in cell bodies and processes associated with the ellipsoid body of the central complex and portions of the mushroom bodies. In the wing disk, expression is confined to a stripe that parallels the anterior/posterior boundary of the wing blade and the hinge region, and weak expression in the prospective notum.

Its subcellular location is the membrane. The enzyme catalyses [G-protein-coupled receptor] + ATP = [G-protein-coupled receptor]-phosphate + ADP + H(+). In terms of biological role, specifically phosphorylates the activated forms of G protein-coupled receptors. Required during oogenesis and embryogenesis; component of a signaling pathway that functions during egg chamber maturation. The chain is G protein-coupled receptor kinase 2 (Gprk2) from Drosophila melanogaster (Fruit fly).